We begin with the raw amino-acid sequence, 340 residues long: Heat-inducible transcription repressor HrcA (340 aa).

The protein belongs to the HrcA family.

Its function is as follows. Negative regulator of class I heat shock genes (grpE-dnaK-dnaJ and groELS operons). Prevents heat-shock induction of these operons. This chain is Heat-inducible transcription repressor HrcA, found in Burkholderia vietnamiensis (strain G4 / LMG 22486) (Burkholderia cepacia (strain R1808)).